Here is a 603-residue protein sequence, read N- to C-terminus: Probable lysosomal cobalamin transporter (603 aa).

9 helical membrane-spanning segments follow: residues 13 to 33 (IWVAYAVAVALVFFVAVITVF), 50 to 70 (IVSLTALLATVFLLPVDIALV), 99 to 119 (IVYYSLYSFDALLCLVVIPFA), 150 to 170 (IAFIILVIILFLVGFFVPTAA), 201 to 221 (LLMTLGVLLYVLYTATGLALL), 318 to 338 (LFGGILLLCLSVILWISMLIT), 353 to 373 (GYILGHINVFQPVNWVFVKAA), 381 to 401 (ILMAFLILFLFSSSITGIASV), and 422 to 442 (ALLIATVMQALIILAINYAVV). A glycan (N-linked (GlcNAc...) asparagine) is linked at N509. Residues 512–532 (VFGAIDFWAQFAFLTVFLLVF) traverse the membrane as a helical segment. The N-linked (GlcNAc...) asparagine glycan is linked to N543. The disordered stretch occupies residues 578–603 (AKRTVGGHPNGQGYGTSGTNGTASSR). Residues 585–595 (HPNGQGYGTSG) are compositionally biased toward gly residues. N597 is a glycosylation site (N-linked (GlcNAc...) asparagine).

It belongs to the LIMR family. LMBRD1 subfamily.

It localises to the lysosome membrane. In terms of biological role, probable lysosomal cobalamin transporter. Required to export cobalamin from lysosomes allowing its conversion to cofactors. The polypeptide is Probable lysosomal cobalamin transporter (Neurospora crassa (strain ATCC 24698 / 74-OR23-1A / CBS 708.71 / DSM 1257 / FGSC 987)).